A 279-amino-acid polypeptide reads, in one-letter code: DegV domain-containing protein CA_C0701 (279 aa).

Positions 4-277 (IKIVTDSTCD…TKACGVFFIE (274 aa)) constitute a DegV domain. Positions 62 and 94 each coordinate hexadecanoate.

May bind long-chain fatty acids, such as palmitate, and may play a role in lipid transport or fatty acid metabolism. The sequence is that of DegV domain-containing protein CA_C0701 from Clostridium acetobutylicum (strain ATCC 824 / DSM 792 / JCM 1419 / IAM 19013 / LMG 5710 / NBRC 13948 / NRRL B-527 / VKM B-1787 / 2291 / W).